A 214-amino-acid chain; its full sequence is MENLFELHADVRVEQGKGASRRLRRAGKVPAVLYGAAKEPISLLFDHNLLFRHLSHDAFYSHILTIHANGKAERVVLKALQRDPVNPNKVLHLDLQRVSSTQKLTIKVPLHFIGDEMAPGVKQEGGTVARLLNDIEISCLAKDLPEYIEVDLADLGVGETVHLSDLKLPGGVEIPALKLGEDYDQPVVTIHKPRAAAEEEDTGAEGDVEAADAE.

The disordered stretch occupies residues Pro193 to Glu214. The segment covering Glu198–Glu214 has biased composition (acidic residues).

This sequence belongs to the bacterial ribosomal protein bL25 family. CTC subfamily. In terms of assembly, part of the 50S ribosomal subunit; part of the 5S rRNA/L5/L18/L25 subcomplex. Contacts the 5S rRNA. Binds to the 5S rRNA independently of L5 and L18.

In terms of biological role, this is one of the proteins that binds to the 5S RNA in the ribosome where it forms part of the central protuberance. The chain is Large ribosomal subunit protein bL25 from Nitrosococcus oceani (strain ATCC 19707 / BCRC 17464 / JCM 30415 / NCIMB 11848 / C-107).